The sequence spans 348 residues: Mamu class I histocompatibility antigen, alpha chain F (348 aa).

The N-terminal stretch at 1–21 is a signal peptide; it reads MAPRTLLLVLSGALALTETWA. An alpha-1 region spans residues 22 to 113; sequence GSHSLRYFST…LLLRYNQSEA (92 aa). Topologically, residues 22–307 are extracellular; the sequence is GSHSLRYFST…ESSSQPTIPI (286 aa). An N-linked (GlcNAc...) asparagine glycan is attached at Asn109. Residues 114-205 form an alpha-2 region; the sequence is GSHTLQGMNG…ENGKETLQRA (92 aa). Cystine bridges form between Cys124–Cys187 and Cys226–Cys282. Residues 206–297 are alpha-3; the sequence is DPPKAHVAHH…GLPQPLTLRW (92 aa). One can recognise an Ig-like C1-type domain in the interval 208-296; sequence PKAHVAHHPI…EGLPQPLTLR (89 aa). The tract at residues 298–307 is connecting peptide; it reads ESSSQPTIPI. A helical transmembrane segment spans residues 308–331; the sequence is VGIVAGLAVLAVVVTGAVVAAVMW. Over 332 to 348 the chain is Cytoplasmic; that stretch reads RRKSSDRNRGSYSQPTM.

Belongs to the MHC class I family. In terms of assembly, heterodimer of an alpha chain and a beta chain (beta-2-microglobulin).

Its subcellular location is the membrane. Functionally, involved in the presentation of foreign antigens to the immune system. This Macaca mulatta (Rhesus macaque) protein is Mamu class I histocompatibility antigen, alpha chain F (Mamu-F).